We begin with the raw amino-acid sequence, 503 residues long: Cobyric acid synthase (503 aa).

The region spanning 245-447 (DISIAIIRLP…LHGIFDEISL (203 aa)) is the GATase cobBQ-type domain. The active-site Nucleophile is C326. The active site involves H439.

This sequence belongs to the CobB/CobQ family. CobQ subfamily.

It participates in cofactor biosynthesis; adenosylcobalamin biosynthesis. Catalyzes amidations at positions B, D, E, and G on adenosylcobyrinic A,C-diamide. NH(2) groups are provided by glutamine, and one molecule of ATP is hydrogenolyzed for each amidation. In Alkaliphilus metalliredigens (strain QYMF), this protein is Cobyric acid synthase.